The primary structure comprises 797 residues: Xaa-Pro dipeptidyl-peptidase (797 aa).

Residues Ser-370, Asp-490, and His-521 each act as charge relay system in the active site.

This sequence belongs to the peptidase S15 family. In terms of assembly, homodimer.

The protein resides in the cytoplasm. The catalysed reaction is Hydrolyzes Xaa-Pro-|- bonds to release unblocked, N-terminal dipeptides from substrates including Ala-Pro-|-p-nitroanilide and (sequentially) Tyr-Pro-|-Phe-Pro-|-Gly-Pro-|-Ile.. In terms of biological role, removes N-terminal dipeptides sequentially from polypeptides having unsubstituted N-termini provided that the penultimate residue is proline. This chain is Xaa-Pro dipeptidyl-peptidase, found in Lacticaseibacillus casei (strain BL23) (Lactobacillus casei).